Consider the following 211-residue polypeptide: Rho-related GTP-binding protein RhoF (211 aa).

An N-acetylmethionine modification is found at methionine 1. Residue 26-33 (GDGGCGKT) participates in GTP binding. The Effector region signature appears at 48–56 (YAPSVFEKY). GTP-binding positions include 73-77 (DTAGQ) and 131-134 (CKTD). Cysteine 208 carries the cysteine methyl ester modification. A lipid anchor (S-geranylgeranyl cysteine) is attached at cysteine 208. A propeptide spans 209–211 (LLL) (removed in mature form).

This sequence belongs to the small GTPase superfamily. Rho family.

It localises to the cell membrane. Its subcellular location is the cytoplasm. It is found in the cytoskeleton. Functionally, plasma membrane-associated small GTPase which cycles between an active GTP-bound and an inactive GDP-bound state. Causes the formation of thin, actin-rich surface projections called filopodia. Functions cooperatively with CDC42 and Rac to generate additional structures, increasing the diversity of actin-based morphology. The sequence is that of Rho-related GTP-binding protein RhoF (Rhof) from Mus musculus (Mouse).